We begin with the raw amino-acid sequence, 355 residues long: Ribosomal RNA small subunit methyltransferase H (355 aa).

S-adenosyl-L-methionine is bound by residues 55–57 (GGH), aspartate 75, aspartate 122, and glutamine 129. Residues 327–355 (ERTSQPLPATGAEDFVPAVPGAAEKGRRR) form a disordered region.

The protein belongs to the methyltransferase superfamily. RsmH family.

Its subcellular location is the cytoplasm. The catalysed reaction is cytidine(1402) in 16S rRNA + S-adenosyl-L-methionine = N(4)-methylcytidine(1402) in 16S rRNA + S-adenosyl-L-homocysteine + H(+). In terms of biological role, specifically methylates the N4 position of cytidine in position 1402 (C1402) of 16S rRNA. The chain is Ribosomal RNA small subunit methyltransferase H from Bordetella avium (strain 197N).